Reading from the N-terminus, the 426-residue chain is 26S proteasome regulatory subunit 7 (426 aa).

209 to 216 is an ATP binding site; the sequence is GPPGTGKT.

The protein belongs to the AAA ATPase family.

It localises to the cytoplasm. The protein localises to the nucleus. Functionally, the 26S proteasome is involved in the ATP-dependent degradation of ubiquitinated proteins. The regulatory (or ATPase) complex confers ATP dependency and substrate specificity to the 26S complex. This chain is 26S proteasome regulatory subunit 7 (RPT1), found in Spinacia oleracea (Spinach).